The sequence spans 301 residues: Phosphatidylserine decarboxylase proenzyme (301 aa).

Active-site charge relay system; for autoendoproteolytic cleavage activity residues include Asp115, His171, and Ser258. Catalysis depends on Ser258, which acts as the Schiff-base intermediate with substrate; via pyruvic acid; for decarboxylase activity. Residue Ser258 is modified to Pyruvic acid (Ser); by autocatalysis.

Belongs to the phosphatidylserine decarboxylase family. PSD-B subfamily. Prokaryotic type II sub-subfamily. As to quaternary structure, heterodimer of a large membrane-associated beta subunit and a small pyruvoyl-containing alpha subunit. The cofactor is pyruvate. Post-translationally, is synthesized initially as an inactive proenzyme. Formation of the active enzyme involves a self-maturation process in which the active site pyruvoyl group is generated from an internal serine residue via an autocatalytic post-translational modification. Two non-identical subunits are generated from the proenzyme in this reaction, and the pyruvate is formed at the N-terminus of the alpha chain, which is derived from the carboxyl end of the proenzyme. The autoendoproteolytic cleavage occurs by a canonical serine protease mechanism, in which the side chain hydroxyl group of the serine supplies its oxygen atom to form the C-terminus of the beta chain, while the remainder of the serine residue undergoes an oxidative deamination to produce ammonia and the pyruvoyl prosthetic group on the alpha chain. During this reaction, the Ser that is part of the protease active site of the proenzyme becomes the pyruvoyl prosthetic group, which constitutes an essential element of the active site of the mature decarboxylase.

It is found in the cell membrane. The enzyme catalyses a 1,2-diacyl-sn-glycero-3-phospho-L-serine + H(+) = a 1,2-diacyl-sn-glycero-3-phosphoethanolamine + CO2. Its pathway is phospholipid metabolism; phosphatidylethanolamine biosynthesis; phosphatidylethanolamine from CDP-diacylglycerol: step 2/2. Catalyzes the formation of phosphatidylethanolamine (PtdEtn) from phosphatidylserine (PtdSer). The sequence is that of Phosphatidylserine decarboxylase proenzyme from Chlamydia pneumoniae (Chlamydophila pneumoniae).